The sequence spans 151 residues: Transcriptional repressor NrdR (151 aa).

A zinc finger spans residues 3 to 34; it reads CPFCGYSESKVVDSRSTEDNMAIRRRRECLEC. One can recognise an ATP-cone domain in the interval 49-139; it reads ILVIKKDSSR…VYRQFKDINT (91 aa).

It belongs to the NrdR family. Zn(2+) is required as a cofactor.

Its function is as follows. Negatively regulates transcription of bacterial ribonucleotide reductase nrd genes and operons by binding to NrdR-boxes. The protein is Transcriptional repressor NrdR of Clostridium acetobutylicum (strain ATCC 824 / DSM 792 / JCM 1419 / IAM 19013 / LMG 5710 / NBRC 13948 / NRRL B-527 / VKM B-1787 / 2291 / W).